Here is a 1384-residue protein sequence, read N- to C-terminus: ATP-dependent RNA helicase TDRD9 (1384 aa).

The disordered stretch occupies residues 35–60 (EAPREEVQRSEEVPSEAPTAQAQDPV). The span at 36-46 (APREEVQRSEE) shows a compositional bias: basic and acidic residues. Residues 144-310 (ISLIESNSVV…FAVPVQNKMN (167 aa)) form the Helicase ATP-binding domain. ATP is bound at residue 157 to 164 (GATGSGKS). Positions 256–259 (DEVH) match the DEAH box motif. The region spanning 379–546 (SGAQFVSERS…VLKVKLLDMG (168 aa)) is the Helicase C-terminal domain. A Tudor domain is found at 946–1006 (HPHPDLVCLA…REIPCQLLEL (61 aa)).

This sequence belongs to the DEAD box helicase family. DEAH subfamily. In terms of assembly, interacts with piRNA-associated proteins PIWIL1 and PIWIL4.

The protein resides in the cytoplasm. Its subcellular location is the nucleus. The enzyme catalyses ATP + H2O = ADP + phosphate + H(+). ATP-binding RNA helicase which plays a central role during spermatogenesis by repressing transposable elements and preventing their mobilization, which is essential for the germline integrity. Acts via the piRNA metabolic process, which mediates the repression of transposable elements during meiosis by forming complexes composed of piRNAs and Piwi proteins and governs the methylation and subsequent repression of transposons. Acts downstream of piRNA biogenesis: exclusively required for transposon silencing in the nucleus, suggesting that it acts as a nuclear effector in the nucleus together with PIWIL4. The chain is ATP-dependent RNA helicase TDRD9 from Rattus norvegicus (Rat).